The sequence spans 271 residues: Formamidopyrimidine-DNA glycosylase (271 aa).

Catalysis depends on Pro2, which acts as the Schiff-base intermediate with DNA. The Proton donor role is filled by Glu3. Lys58 (proton donor; for beta-elimination activity) is an active-site residue. DNA contacts are provided by His92, Arg111, and Arg152. Residues 237 to 271 (MVYGREGQACKHCGRELKHATIGQRATVWCAACQR) form an FPG-type zinc finger. Arg261 acts as the Proton donor; for delta-elimination activity in catalysis.

Belongs to the FPG family. As to quaternary structure, monomer. It depends on Zn(2+) as a cofactor.

It catalyses the reaction Hydrolysis of DNA containing ring-opened 7-methylguanine residues, releasing 2,6-diamino-4-hydroxy-5-(N-methyl)formamidopyrimidine.. It carries out the reaction 2'-deoxyribonucleotide-(2'-deoxyribose 5'-phosphate)-2'-deoxyribonucleotide-DNA = a 3'-end 2'-deoxyribonucleotide-(2,3-dehydro-2,3-deoxyribose 5'-phosphate)-DNA + a 5'-end 5'-phospho-2'-deoxyribonucleoside-DNA + H(+). In terms of biological role, involved in base excision repair of DNA damaged by oxidation or by mutagenic agents. Acts as a DNA glycosylase that recognizes and removes damaged bases. Has a preference for oxidized purines, such as 7,8-dihydro-8-oxoguanine (8-oxoG). Has AP (apurinic/apyrimidinic) lyase activity and introduces nicks in the DNA strand. Cleaves the DNA backbone by beta-delta elimination to generate a single-strand break at the site of the removed base with both 3'- and 5'-phosphates. The polypeptide is Formamidopyrimidine-DNA glycosylase (Xanthomonas campestris pv. campestris (strain B100)).